We begin with the raw amino-acid sequence, 241 residues long: MGQKVNPIGLRLGINRNWESRWFPNFKTAAAYLGEDHKIRTYLKKELYYAGVSNIVIERTAKRLRVTIIAARPGIIIGKKGSDIEKLKDTLQALVGKPLSVNIKEEKKAQISSQLVAENVATQLERRVAFRRAMKKVMQNAQRGGAKGIKVSVSGRLGGAEMARTEWYLEGRVPLHTLRAKIDYGFAEAHTTYGCIGVKVWIFKGEVLTKGIPAEVKEEQQKEGARRPKRAPKRENSGKAE.

A KH type-2 domain is found at 39 to 107; the sequence is IRTYLKKELY…PLSVNIKEEK (69 aa). The tract at residues 214–241 is disordered; it reads AEVKEEQQKEGARRPKRAPKRENSGKAE. Basic and acidic residues predominate over residues 215-226; it reads EVKEEQQKEGAR.

Belongs to the universal ribosomal protein uS3 family. In terms of assembly, part of the 30S ribosomal subunit. Forms a tight complex with proteins S10 and S14.

Binds the lower part of the 30S subunit head. Binds mRNA in the 70S ribosome, positioning it for translation. The protein is Small ribosomal subunit protein uS3 of Sulfurimonas denitrificans (strain ATCC 33889 / DSM 1251) (Thiomicrospira denitrificans (strain ATCC 33889 / DSM 1251)).